A 90-amino-acid polypeptide reads, in one-letter code: MVDQLESEIIGIIKNRVESEGGDGETALIVGDLTAATELTALGVDSLGLADIIWDVEQAYGYQDRDEHGRGVVGSPERRRHSGSHPRLAH.

Residues 4-89 (QLESEIIGII…RHSGSHPRLA (86 aa)) form the Carrier domain. O-(pantetheine 4'-phosphoryl)serine is present on serine 46. Positions 65–90 (RDEHGRGVVGSPERRRHSGSHPRLAH) are disordered. Basic residues predominate over residues 78–90 (RRRHSGSHPRLAH).

In terms of processing, 4'-phosphopantetheine is transferred from CoA to a specific serine of apo-NodF.

Functionally, proposed to synthesize nod factor fatty acyl chain. Involved in trans-2,trans-4,trans-6,cis-11-octadecatetraenoic acid biosynthesis. The polypeptide is Nodulation protein F (nodF) (Rhizobium meliloti (Ensifer meliloti)).